A 202-amino-acid chain; its full sequence is Recombination protein RecR (202 aa).

The C4-type zinc-finger motif lies at 59 to 74 (CSVCFHLSAEPVCEIC). Residues 82-176 (HTICVVADSR…KVTRIAFGLP (95 aa)) enclose the Toprim domain.

The protein belongs to the RecR family.

In terms of biological role, may play a role in DNA repair. It seems to be involved in an RecBC-independent recombinational process of DNA repair. It may act with RecF and RecO. The protein is Recombination protein RecR of Thermosynechococcus vestitus (strain NIES-2133 / IAM M-273 / BP-1).